The primary structure comprises 316 residues: Ribosomal RNA small subunit methyltransferase H (316 aa).

S-adenosyl-L-methionine is bound by residues S35–H37, D55, F84, D105, and Q112.

The protein belongs to the methyltransferase superfamily. RsmH family.

It is found in the cytoplasm. The enzyme catalyses cytidine(1402) in 16S rRNA + S-adenosyl-L-methionine = N(4)-methylcytidine(1402) in 16S rRNA + S-adenosyl-L-homocysteine + H(+). Specifically methylates the N4 position of cytidine in position 1402 (C1402) of 16S rRNA. The polypeptide is Ribosomal RNA small subunit methyltransferase H (Streptococcus pyogenes serotype M18 (strain MGAS8232)).